The primary structure comprises 131 residues: Sulfurtransferase TusD (131 aa).

The Cysteine persulfide intermediate role is filled by C81.

The protein belongs to the DsrE/TusD family. In terms of assembly, heterohexamer, formed by a dimer of trimers. The hexameric TusBCD complex contains 2 copies each of TusB, TusC and TusD. The TusBCD complex interacts with TusE.

The protein resides in the cytoplasm. Its function is as follows. Part of a sulfur-relay system required for 2-thiolation of 5-methylaminomethyl-2-thiouridine (mnm(5)s(2)U) at tRNA wobble positions. Accepts sulfur from TusA and transfers it in turn to TusE. The polypeptide is Sulfurtransferase TusD (Photorhabdus laumondii subsp. laumondii (strain DSM 15139 / CIP 105565 / TT01) (Photorhabdus luminescens subsp. laumondii)).